A 423-amino-acid chain; its full sequence is Glutamyl-tRNA(Gln) amidotransferase subunit A (423 aa).

The segment at 1–20 is disordered; the sequence is MSHNAFITEETIEPTDDGPL. Positions 10 to 19 are enriched in acidic residues; sequence ETIEPTDDGP. Residues Lys-28 and Ser-103 each act as charge relay system in the active site. Residues 75–108 are disordered; the sequence is EFGMGTTTETSAFGPTENPAAEGRVPGGSSGGSA. Residue Ser-127 is the Acyl-ester intermediate of the active site. Positions 183–206 are disordered; that stretch reads DERDGTTREPPAGQPTYADAADGD.

It belongs to the amidase family. GatA subfamily. In terms of assembly, heterotrimer of A, B and C subunits.

It carries out the reaction L-glutamyl-tRNA(Gln) + L-glutamine + ATP + H2O = L-glutaminyl-tRNA(Gln) + L-glutamate + ADP + phosphate + H(+). In terms of biological role, allows the formation of correctly charged Gln-tRNA(Gln) through the transamidation of misacylated Glu-tRNA(Gln) in organisms which lack glutaminyl-tRNA synthetase. The reaction takes place in the presence of glutamine and ATP through an activated gamma-phospho-Glu-tRNA(Gln). This is Glutamyl-tRNA(Gln) amidotransferase subunit A from Natronomonas pharaonis (strain ATCC 35678 / DSM 2160 / CIP 103997 / JCM 8858 / NBRC 14720 / NCIMB 2260 / Gabara) (Halobacterium pharaonis).